The primary structure comprises 412 residues: COP9 signalosome complex subunit 4 (412 aa).

In terms of domain architecture, PCI spans 216–378 (EAAQRYYELS…GILHFEDSNP (163 aa)).

Belongs to the CSN4 family. In terms of assembly, component of the CSN complex, probably composed of csn-1, csn-2, csn-3, csn-4, csn-5, csn-6 and csn-7. Within the complex it probably interacts directly with csn-2 and csn-4. In the complex, it probably interacts directly with csn-1, csn-2, csn-3 and csn-6. Interacts with itself.

It is found in the cytoplasm. The protein localises to the nucleus. In terms of biological role, component of the COP9 signalosome complex (CSN), a complex involved in various cellular and developmental processes. The CSN complex is an essential regulator of the ubiquitin (Ubl) conjugation pathway by mediating the deneddylation of the cullin subunits of the SCF-type E3 ligase complexes, leading to decrease the Ubl ligase activity of SCF. The CSN complex plays an essential role in embryogenesis and oogenesis and is required to regulate microtubule stability in the early embryo. Mediates mei-3/katanin targeting for degradation at the meiosis to mitosis transition via deneddylation of cul-3. The polypeptide is COP9 signalosome complex subunit 4 (csn-4) (Caenorhabditis elegans).